The chain runs to 284 residues: uncharacterized protein (284 aa).

The N-terminal stretch at 1–23 is a signal peptide; the sequence is MKRGCAIAVMICGLITSVSAASA.

Belongs to the surface antigen msp4 family.

This is an uncharacterized protein from Brucella melitensis biotype 1 (strain ATCC 23456 / CCUG 17765 / NCTC 10094 / 16M).